Reading from the N-terminus, the 336-residue chain is Foldase protein PrsA (336 aa).

Residues 1-22 (MKSAKKLLSVLCLGIFILTFTA) form the signal peptide. C23 is lipidated: N-palmitoyl cysteine. The S-diacylglycerol cysteine moiety is linked to residue C23. In terms of domain architecture, PpiC spans 194-286 (PNTMNVSHIL…WGYHIIKINS (93 aa)).

This sequence belongs to the PrsA family.

The protein localises to the cell membrane. The catalysed reaction is [protein]-peptidylproline (omega=180) = [protein]-peptidylproline (omega=0). In terms of biological role, plays a major role in protein secretion by helping the post-translocational extracellular folding of several secreted proteins. This Clostridium botulinum (strain Langeland / NCTC 10281 / Type F) protein is Foldase protein PrsA.